The following is a 301-amino-acid chain: uncharacterized protein (301 aa).

2 disordered regions span residues 167-186 and 225-244; these read DVHLNSTTPPHTAQVSPKER and ASESSLETSSVSSPQPEGAS. Over residues 170–181 the composition is skewed to polar residues; the sequence is LNSTTPPHTAQV. The span at 226–237 shows a compositional bias: low complexity; the sequence is SESSLETSSVSS.

This is an uncharacterized protein from Mus musculus (Mouse).